The chain runs to 318 residues: Thymidylate synthase (318 aa).

DUMP is bound by residues R25 and 180-181 (RR). C200 functions as the Nucleophile in the catalytic mechanism. DUMP-binding positions include 220–223 (RSGD), N231, and 261–263 (HIY). D223 contributes to the (6R)-5,10-methylene-5,6,7,8-tetrahydrofolate binding site. Position 317 (A317) interacts with (6R)-5,10-methylene-5,6,7,8-tetrahydrofolate.

The protein belongs to the thymidylate synthase family. Bacterial-type ThyA subfamily. As to quaternary structure, homodimer.

The protein resides in the cytoplasm. It catalyses the reaction dUMP + (6R)-5,10-methylene-5,6,7,8-tetrahydrofolate = 7,8-dihydrofolate + dTMP. It participates in pyrimidine metabolism; dTTP biosynthesis. Functionally, catalyzes the reductive methylation of 2'-deoxyuridine-5'-monophosphate (dUMP) to 2'-deoxythymidine-5'-monophosphate (dTMP) while utilizing 5,10-methylenetetrahydrofolate (mTHF) as the methyl donor and reductant in the reaction, yielding dihydrofolate (DHF) as a by-product. This enzymatic reaction provides an intracellular de novo source of dTMP, an essential precursor for DNA biosynthesis. The sequence is that of Thymidylate synthase from Bacillus cereus (strain ATCC 14579 / DSM 31 / CCUG 7414 / JCM 2152 / NBRC 15305 / NCIMB 9373 / NCTC 2599 / NRRL B-3711).